The following is a 182-amino-acid chain: Ribosomal RNA small subunit methyltransferase G (182 aa).

S-adenosyl-L-methionine is bound by residues Gly-58, Phe-63, Ile-109 to Glu-110, and Arg-123.

The protein belongs to the methyltransferase superfamily. RNA methyltransferase RsmG family.

Its subcellular location is the cytoplasm. The enzyme catalyses guanosine(527) in 16S rRNA + S-adenosyl-L-methionine = N(7)-methylguanosine(527) in 16S rRNA + S-adenosyl-L-homocysteine. Functionally, specifically methylates the N7 position of guanine in position 527 of 16S rRNA. The polypeptide is Ribosomal RNA small subunit methyltransferase G (Campylobacter fetus subsp. fetus (strain 82-40)).